The chain runs to 63 residues: Protease 2 small chain (63 aa).

In terms of domain architecture, Peptidase S8 spans 11–63 (QWGLSGTYGIRANTAWDNGYQGQGKIIAVVDTGITDHPDLLANRTSPLGYDFI).

It belongs to the peptidase S8 family. In terms of assembly, heterodimer of a large and a small chain.

The protein resides in the secreted. This Achromobacter lyticus protein is Protease 2 small chain.